Reading from the N-terminus, the 672-residue chain is DNA ligase (672 aa).

NAD(+) is bound by residues D30–D34, S79–L80, and E110. The active-site N6-AMP-lysine intermediate is K112. Positions 133, 170, 287, and 311 each coordinate NAD(+). The Zn(2+) site is built by C405, C408, C423, and C429. A BRCT domain is found at A590–I672.

The protein belongs to the NAD-dependent DNA ligase family. LigA subfamily. Requires Mg(2+) as cofactor. The cofactor is Mn(2+).

It carries out the reaction NAD(+) + (deoxyribonucleotide)n-3'-hydroxyl + 5'-phospho-(deoxyribonucleotide)m = (deoxyribonucleotide)n+m + AMP + beta-nicotinamide D-nucleotide.. Its function is as follows. DNA ligase that catalyzes the formation of phosphodiester linkages between 5'-phosphoryl and 3'-hydroxyl groups in double-stranded DNA using NAD as a coenzyme and as the energy source for the reaction. It is essential for DNA replication and repair of damaged DNA. The protein is DNA ligase of Marinomonas sp. (strain MWYL1).